A 407-amino-acid chain; its full sequence is Pyridinium-3,5-bisthiocarboxylic acid mononucleotide nickel insertion protein (407 aa).

It belongs to the LarC family.

The catalysed reaction is Ni(II)-pyridinium-3,5-bisthiocarboxylate mononucleotide = pyridinium-3,5-bisthiocarboxylate mononucleotide + Ni(2+). In terms of biological role, involved in the biosynthesis of a nickel-pincer cofactor ((SCS)Ni(II) pincer complex). Binds Ni(2+), and functions in nickel delivery to pyridinium-3,5-bisthiocarboxylic acid mononucleotide (P2TMN), to form the mature cofactor. Is thus probably required for the activation of nickel-pincer cofactor-dependent enzymes. In Acetivibrio thermocellus (strain ATCC 27405 / DSM 1237 / JCM 9322 / NBRC 103400 / NCIMB 10682 / NRRL B-4536 / VPI 7372) (Clostridium thermocellum), this protein is Pyridinium-3,5-bisthiocarboxylic acid mononucleotide nickel insertion protein.